Here is a 385-residue protein sequence, read N- to C-terminus: Arginine biosynthesis bifunctional protein ArgJ (385 aa).

6 residues coordinate substrate: Thr-142, Lys-168, Thr-179, Glu-259, Asn-380, and Thr-385. Thr-179 functions as the Nucleophile in the catalytic mechanism.

Belongs to the ArgJ family. As to quaternary structure, heterotetramer of two alpha and two beta chains.

It is found in the cytoplasm. The catalysed reaction is N(2)-acetyl-L-ornithine + L-glutamate = N-acetyl-L-glutamate + L-ornithine. It carries out the reaction L-glutamate + acetyl-CoA = N-acetyl-L-glutamate + CoA + H(+). The protein operates within amino-acid biosynthesis; L-arginine biosynthesis; L-ornithine and N-acetyl-L-glutamate from L-glutamate and N(2)-acetyl-L-ornithine (cyclic): step 1/1. Its pathway is amino-acid biosynthesis; L-arginine biosynthesis; N(2)-acetyl-L-ornithine from L-glutamate: step 1/4. Catalyzes two activities which are involved in the cyclic version of arginine biosynthesis: the synthesis of N-acetylglutamate from glutamate and acetyl-CoA as the acetyl donor, and of ornithine by transacetylation between N(2)-acetylornithine and glutamate. The chain is Arginine biosynthesis bifunctional protein ArgJ from Leptospira interrogans serogroup Icterohaemorrhagiae serovar copenhageni (strain Fiocruz L1-130).